A 227-amino-acid chain; its full sequence is Uracil-DNA glycosylase (227 aa).

Asp-68 serves as the catalytic Proton acceptor.

It belongs to the uracil-DNA glycosylase (UDG) superfamily. UNG family.

It localises to the cytoplasm. It carries out the reaction Hydrolyzes single-stranded DNA or mismatched double-stranded DNA and polynucleotides, releasing free uracil.. Excises uracil residues from the DNA which can arise as a result of misincorporation of dUMP residues by DNA polymerase or due to deamination of cytosine. This is Uracil-DNA glycosylase from Mycobacterium sp. (strain JLS).